The sequence spans 353 residues: THUMP domain-containing protein 1 (353 aa).

Residues 1–10 are compositionally biased toward polar residues; the sequence is MAAPAQQTTQ. Disordered regions lie at residues 1–20 and 73–96; these read MAAP…KGKA and YGPE…DDAE. A2 carries the post-translational modification N-acetylalanine. T79 is subject to Phosphothreonine. Phosphoserine is present on residues S86, S88, and S119. Residues 147-254 enclose the THUMP domain; that stretch reads DMYKTKKKKT…KAVCCLSVVK (108 aa). S270 is subject to Phosphoserine. A disordered region spans residues 270–353; that stretch reads SPKDPSQLNS…GSKSNENDFS (84 aa). A compositionally biased stretch (polar residues) spans 273–282; sequence DPSQLNSKQG. Basic and acidic residues predominate over residues 283-296; that stretch reads NGKEAKLESADKSD. The span at 297–327 shows a compositional bias: polar residues; that stretch reads QNNTAEGKNNQQVPENTEELGQTKPTSNPQV.

This sequence belongs to the THUMPD1 family. In terms of assembly, interacts with NAT10. Binds tRNA.

In terms of biological role, functions as a tRNA-binding adapter to mediate NAT10-dependent tRNA acetylation modifying cytidine to N4-acetylcytidine (ac4C). The chain is THUMP domain-containing protein 1 (THUMPD1) from Homo sapiens (Human).